The chain runs to 373 residues: tRNA-specific 2-thiouridylase MnmA (373 aa).

Residues 12–19 and methionine 38 each bind ATP; that span reads GMSGGVDS. The tract at residues 98–100 is interaction with target base in tRNA; it reads NPD. Cysteine 103 acts as the Nucleophile in catalysis. Cysteine 103 and cysteine 200 are disulfide-bonded. Glycine 127 contacts ATP. The interaction with tRNA stretch occupies residues 150-152; sequence KDQ. The active-site Cysteine persulfide intermediate is cysteine 200. Residues 312–313 form an interaction with tRNA region; the sequence is RY.

Belongs to the MnmA/TRMU family.

It is found in the cytoplasm. It carries out the reaction S-sulfanyl-L-cysteinyl-[protein] + uridine(34) in tRNA + AH2 + ATP = 2-thiouridine(34) in tRNA + L-cysteinyl-[protein] + A + AMP + diphosphate + H(+). Functionally, catalyzes the 2-thiolation of uridine at the wobble position (U34) of tRNA, leading to the formation of s(2)U34. In Streptococcus pyogenes serotype M49 (strain NZ131), this protein is tRNA-specific 2-thiouridylase MnmA.